Consider the following 357-residue polypeptide: Alanine racemase (357 aa).

The Proton acceptor; specific for D-alanine role is filled by Lys35. N6-(pyridoxal phosphate)lysine is present on Lys35. Arg130 is a substrate binding site. Residue Tyr255 is the Proton acceptor; specific for L-alanine of the active site. Met303 lines the substrate pocket.

It belongs to the alanine racemase family. Pyridoxal 5'-phosphate is required as a cofactor.

It catalyses the reaction L-alanine = D-alanine. It functions in the pathway amino-acid biosynthesis; D-alanine biosynthesis; D-alanine from L-alanine: step 1/1. Functionally, catalyzes the interconversion of L-alanine and D-alanine. May also act on other amino acids. This Nitrosospira multiformis (strain ATCC 25196 / NCIMB 11849 / C 71) protein is Alanine racemase (alr).